Here is a 173-residue protein sequence, read N- to C-terminus: Alpha-crystallin B chain (173 aa).

Methionine 1 carries the post-translational modification N-acetylmethionine. In terms of domain architecture, sHSP spans 54 to 162 (RLPSWIESGL…PERSIPITRE (109 aa)). Zn(2+) contacts are provided by histidine 81, histidine 102, glutamate 104, and histidine 109.

Belongs to the small heat shock protein (HSP20) family. In terms of assembly, heteromer composed of three CRYAA and one CRYAB subunits. Aggregates with homologous proteins, including the small heat shock protein HSPB1, to form large heteromeric complexes. Inter-subunit bridging via zinc ions enhances stability, which is crucial as there is no protein turn over in the lens.

Functionally, may contribute to the transparency and refractive index of the lens. This Aquarana catesbeiana (American bullfrog) protein is Alpha-crystallin B chain (CRYAB).